The following is a 93-amino-acid chain: Small ribosomal subunit protein uS19 (93 aa).

The protein belongs to the universal ribosomal protein uS19 family.

Protein S19 forms a complex with S13 that binds strongly to the 16S ribosomal RNA. The polypeptide is Small ribosomal subunit protein uS19 (Alkaliphilus oremlandii (strain OhILAs) (Clostridium oremlandii (strain OhILAs))).